The following is a 474-amino-acid chain: 3-isopropylmalate dehydratase large subunit (474 aa).

[4Fe-4S] cluster is bound by residues C353, C414, and C417.

The protein belongs to the aconitase/IPM isomerase family. LeuC type 1 subfamily. As to quaternary structure, heterodimer of LeuC and LeuD. It depends on [4Fe-4S] cluster as a cofactor.

It carries out the reaction (2R,3S)-3-isopropylmalate = (2S)-2-isopropylmalate. It participates in amino-acid biosynthesis; L-leucine biosynthesis; L-leucine from 3-methyl-2-oxobutanoate: step 2/4. Catalyzes the isomerization between 2-isopropylmalate and 3-isopropylmalate, via the formation of 2-isopropylmaleate. In Xylella fastidiosa (strain M23), this protein is 3-isopropylmalate dehydratase large subunit.